Reading from the N-terminus, the 251-residue chain is Hydroxyacylglutathione hydrolase (251 aa).

The Zn(2+) site is built by His53, His55, Asp57, His58, His110, Asp127, and His165.

The protein belongs to the metallo-beta-lactamase superfamily. Glyoxalase II family. As to quaternary structure, monomer. Requires Zn(2+) as cofactor.

It carries out the reaction an S-(2-hydroxyacyl)glutathione + H2O = a 2-hydroxy carboxylate + glutathione + H(+). The protein operates within secondary metabolite metabolism; methylglyoxal degradation; (R)-lactate from methylglyoxal: step 2/2. Thiolesterase that catalyzes the hydrolysis of S-D-lactoyl-glutathione to form glutathione and D-lactic acid. This Salmonella agona (strain SL483) protein is Hydroxyacylglutathione hydrolase.